The sequence spans 452 residues: Probable splicing factor, arginine/serine-rich 7 (452 aa).

RRM domains are found at residues 10 to 91 and 163 to 240; these read KILH…YPNP and RTVY…HSRV. The tract at residues 258 to 452 is disordered; that stretch reads EEAIRMGRNG…GNGDVVMASE (195 aa). The segment covering 259–272 has biased composition (basic and acidic residues); that stretch reads EAIRMGRNGDDRDR. The segment covering 273–290 has biased composition (basic residues); the sequence is RRSRSPRRRRSPSPRRRR. Residues 291 to 305 show a composition bias toward basic and acidic residues; that stretch reads DSRDRDRDRDRDRRR. 3 stretches are compositionally biased toward basic residues: residues 323–335, 345–360, and 370–382; these read KRSR…RRSR, KRSR…KSRD, and SKDR…RSRS. Positions 383–421 are enriched in basic and acidic residues; it reads RSPEKRRDKEDRKTEKKENENESSLREKLLEKKAARKDS.

It belongs to the splicing factor SR family. Post-translationally, extensively phosphorylated on serine residues in the RS domain.

The protein resides in the nucleus. This is Probable splicing factor, arginine/serine-rich 7 (rsp-7) from Caenorhabditis elegans.